The chain runs to 152 residues: Anti-CBASS protein Acb1 (152 aa).

Residue Tyr12 participates in 3',3'-cGAMP binding. A 3',3'-cUAMP-binding site is contributed by Tyr12. Active-site residues include His44, Thr46, His113, and Thr115. The 3',3'-cGAMP site is built by Glu141 and Trp147. Glu141 and Trp147 together coordinate 3',3'-cUAMP.

It belongs to the anti-CBASS protein Acb1 family.

It catalyses the reaction 3',3'-cUAMP + H2O = U[3'-5']pAp[3'] + H(+). The catalysed reaction is 3',3',3'-c-tri-AMP + H2O = A[3'-5']pA[3'-5']pAp[3'] + H(+). It carries out the reaction 3',3',3'-cAAG + H2O = G[3'-5']pA[3'-5']pAp[3'] + H(+). The enzyme catalyses 3',3',3'-cAAG + H2O = A[3'-5']pG[3'-5']pAp[3'] + H(+). It catalyses the reaction 3',3'-cGAMP + H2O = G[3'-5']pAp[3'] + H(+). Functionally, counteracts the host CBASS antiviral defense system. Phosphodiesterase that enables metal-independent hydrolysis of the host cyclic di- and trinucleotide CBASS signals such as 3'3'-cGAMP, 3'3'cUA, and 3'3'3'-cAAA. Does not cleave cGG or cA4. Besides evasion of the CBASS system, might also enable evasion of the type III CRISPR systems that use cA3 signals. The chain is Anti-CBASS protein Acb1 from Salmonella phage S16 (Salmonella phage vB_SenM-S16).